Consider the following 199-residue polypeptide: Pyridoxal 5'-phosphate synthase subunit PdxT (199 aa).

49-51 (GES) contributes to the L-glutamine binding site. Cys-81 serves as the catalytic Nucleophile. Residues Arg-110 and 139-140 (IR) contribute to the L-glutamine site. Residues His-175 and Glu-177 each act as charge relay system in the active site.

This sequence belongs to the glutaminase PdxT/SNO family. In terms of assembly, in the presence of PdxS, forms a dodecamer of heterodimers. Only shows activity in the heterodimer.

The catalysed reaction is aldehydo-D-ribose 5-phosphate + D-glyceraldehyde 3-phosphate + L-glutamine = pyridoxal 5'-phosphate + L-glutamate + phosphate + 3 H2O + H(+). The enzyme catalyses L-glutamine + H2O = L-glutamate + NH4(+). It participates in cofactor biosynthesis; pyridoxal 5'-phosphate biosynthesis. Functionally, catalyzes the hydrolysis of glutamine to glutamate and ammonia as part of the biosynthesis of pyridoxal 5'-phosphate. The resulting ammonia molecule is channeled to the active site of PdxS. This Frankia alni (strain DSM 45986 / CECT 9034 / ACN14a) protein is Pyridoxal 5'-phosphate synthase subunit PdxT.